Reading from the N-terminus, the 440-residue chain is GTPase Der (440 aa).

EngA-type G domains are found at residues 4–169 (PVVA…PEED) and 178–353 (IKVA…DQAA). Residues 10-17 (GRPNVGKS), 57-61 (DTGGI), 120-123 (NKVD), 184-191 (GKPNVGKS), 231-235 (DTAGI), and 296-299 (NKWD) contribute to the GTP site. One can recognise a KH-like domain in the interval 354-438 (MRISTGVLND…PIKFILREKE (85 aa)).

Belongs to the TRAFAC class TrmE-Era-EngA-EngB-Septin-like GTPase superfamily. EngA (Der) GTPase family. As to quaternary structure, associates with the 50S ribosomal subunit.

GTPase that plays an essential role in the late steps of ribosome biogenesis. The polypeptide is GTPase Der (Acetivibrio thermocellus (strain ATCC 27405 / DSM 1237 / JCM 9322 / NBRC 103400 / NCIMB 10682 / NRRL B-4536 / VPI 7372) (Clostridium thermocellum)).